Reading from the N-terminus, the 140-residue chain is Cysteine desulfuration protein SufE (140 aa).

Cys51 acts as the Cysteine persulfide intermediate in catalysis.

The protein belongs to the SufE family. In terms of assembly, homodimer. Interacts with SufS.

It localises to the cytoplasm. It participates in cofactor biosynthesis; iron-sulfur cluster biosynthesis. Its function is as follows. Participates in cysteine desulfuration mediated by SufS. Cysteine desulfuration mobilizes sulfur from L-cysteine to yield L-alanine and constitutes an essential step in sulfur metabolism for biosynthesis of a variety of sulfur-containing biomolecules. Functions as a sulfur acceptor for SufS, by mediating the direct transfer of the sulfur atom from the S-sulfanylcysteine of SufS, an intermediate product of cysteine desulfuration process. The protein is Cysteine desulfuration protein SufE of Yersinia pseudotuberculosis serotype O:1b (strain IP 31758).